Consider the following 904-residue polypeptide: Translation initiation factor IF-2 (904 aa).

Residues 239–316 (QAATQAKTSE…DDGQGSFQAP (78 aa)) form a disordered region. Residues 248 to 278 (EGAEKGTLHKKPETPGKKGDKGGRAADDGKK) are compositionally biased toward basic and acidic residues. The tr-type G domain occupies 404–571 (HRAPVVTVMG…QVLLQAEILE (168 aa)). Positions 413–420 (GHVDHGKT) are G1. 413 to 420 (GHVDHGKT) serves as a coordination point for GTP. The segment at 438 to 442 (GITQH) is G2. Residues 459-462 (DTPG) form a G3 region. GTP contacts are provided by residues 459–463 (DTPGH) and 513–516 (NKID). The interval 513–516 (NKID) is G4. The segment at 549-551 (SAK) is G5.

This sequence belongs to the TRAFAC class translation factor GTPase superfamily. Classic translation factor GTPase family. IF-2 subfamily.

The protein localises to the cytoplasm. Its function is as follows. One of the essential components for the initiation of protein synthesis. Protects formylmethionyl-tRNA from spontaneous hydrolysis and promotes its binding to the 30S ribosomal subunits. Also involved in the hydrolysis of GTP during the formation of the 70S ribosomal complex. This is Translation initiation factor IF-2 from Dechloromonas aromatica (strain RCB).